A 313-amino-acid chain; its full sequence is MLDKVLKIATRQSPLALWQAQYVKARLEQAHPGLNVELVPMVTRGDVILDTPLAKVGGKGLFVKELELAMLEGRADIAVHSMKDVPVEFPEGLGLVTICERDDPRDAFVSNHYASIDELPAGSVVGTSSLRRQCQLAATRPDLVIRSLRGNVGTRLSKLDNGEYDAIILAAAGLKRLKLEARIRQPLSPEQSLPAVGQGAVGIECRLDDAWTQALLAPLNHAETAVRVRAERAMNTRLEGGCQVPIGSYAELVNGELWLRALVGAPDGSQMVRGERRGPAEQAEALGISLAEELLDNGARDILAAVYDGEAPR.

Cysteine 242 carries the post-translational modification S-(dipyrrolylmethanemethyl)cysteine.

It belongs to the HMBS family. In terms of assembly, monomer. Dipyrromethane is required as a cofactor.

The catalysed reaction is 4 porphobilinogen + H2O = hydroxymethylbilane + 4 NH4(+). Its pathway is porphyrin-containing compound metabolism; protoporphyrin-IX biosynthesis; coproporphyrinogen-III from 5-aminolevulinate: step 2/4. In terms of biological role, tetrapolymerization of the monopyrrole PBG into the hydroxymethylbilane pre-uroporphyrinogen in several discrete steps. The polypeptide is Porphobilinogen deaminase (Klebsiella pneumoniae (strain 342)).